The chain runs to 296 residues: MSQKELWYETLHANFGQYFSVENVLFREKTEHQDLVIFENPELGRVMALDGVVQTTERDEFIYHEMMTHVPLLAHGQAKKVLIIGGGDGAMLREVSRHKNIEQITMVEIDAGVVEFCRQYLPNHSAGAYDDPRFKLVIDDGVNFVNQTTEKFDVIISDCTDPIGPGESLFTSVFYEGCARSLNEGGIFVAQNGVCFLQQDEAVNSHNKLSHYFSDVSFYQAAIPTYYGGIMTFAWATQNPALRQLDLATLQNRFAQAGLACRYYNPAIHVGSFALPQYLLDALTTIPKVIGVDSSE.

Residues 5 to 238 enclose the PABS domain; that stretch reads ELWYETLHAN…GIMTFAWATQ (234 aa). Position 33 (glutamine 33) interacts with S-methyl-5'-thioadenosine. Residues histidine 64 and aspartate 88 each coordinate spermidine. S-methyl-5'-thioadenosine-binding positions include glutamate 108 and 140 to 141; that span reads DG. Residue aspartate 158 is the Proton acceptor of the active site. 158–161 serves as a coordination point for spermidine; the sequence is DCTD. Residue proline 165 participates in S-methyl-5'-thioadenosine binding.

It belongs to the spermidine/spermine synthase family. In terms of assembly, homodimer or homotetramer.

Its subcellular location is the cytoplasm. The catalysed reaction is S-adenosyl 3-(methylsulfanyl)propylamine + putrescine = S-methyl-5'-thioadenosine + spermidine + H(+). The protein operates within amine and polyamine biosynthesis; spermidine biosynthesis; spermidine from putrescine: step 1/1. Its function is as follows. Catalyzes the irreversible transfer of a propylamine group from the amino donor S-adenosylmethioninamine (decarboxy-AdoMet) to putrescine (1,4-diaminobutane) to yield spermidine. In Yersinia pestis bv. Antiqua (strain Antiqua), this protein is Polyamine aminopropyltransferase.